The following is a 533-amino-acid chain: Peptide chain release factor 3 (533 aa).

Residues 11–284 (RRRRTFAIIS…ALVGLSPEPL (274 aa)) form the tr-type G domain. GTP contacts are provided by residues 20–27 (SHPDAGKT), 92–96 (DTPGH), and 146–149 (NKLD).

Belongs to the TRAFAC class translation factor GTPase superfamily. Classic translation factor GTPase family. PrfC subfamily.

Its subcellular location is the cytoplasm. Its function is as follows. Increases the formation of ribosomal termination complexes and stimulates activities of RF-1 and RF-2. It binds guanine nucleotides and has strong preference for UGA stop codons. It may interact directly with the ribosome. The stimulation of RF-1 and RF-2 is significantly reduced by GTP and GDP, but not by GMP. This is Peptide chain release factor 3 from Ralstonia nicotianae (strain ATCC BAA-1114 / GMI1000) (Ralstonia solanacearum).